Reading from the N-terminus, the 78-residue chain is Surfactant-associated protein 2 (78 aa).

The signal sequence occupies residues 1–19 (MGAGLPLVLLLTLVGSSQG). The N-linked (GlcNAc...) asparagine glycan is linked to N37.

N-glycosylated.

Its subcellular location is the secreted. The protein localises to the cytoplasmic vesicle. The protein resides in the secretory vesicle. It is found in the golgi apparatus. Functionally, putative surfactant protein. This is Surfactant-associated protein 2 (SFTA2) from Bos taurus (Bovine).